Here is a 294-residue protein sequence, read N- to C-terminus: ATP synthase gamma chain (294 aa).

Belongs to the ATPase gamma chain family. F-type ATPases have 2 components, CF(1) - the catalytic core - and CF(0) - the membrane proton channel. CF(1) has five subunits: alpha(3), beta(3), gamma(1), delta(1), epsilon(1). CF(0) has three main subunits: a, b and c.

The protein resides in the cell inner membrane. Its function is as follows. Produces ATP from ADP in the presence of a proton gradient across the membrane. The gamma chain is believed to be important in regulating ATPase activity and the flow of protons through the CF(0) complex. In Paramagnetospirillum magneticum (strain ATCC 700264 / AMB-1) (Magnetospirillum magneticum), this protein is ATP synthase gamma chain.